A 105-amino-acid chain; its full sequence is Prokineticin-1 (105 aa).

The first 19 residues, 1–19, serve as a signal peptide directing secretion; the sequence is MRGAVHIFIMLLLATASDC. 5 cysteine pairs are disulfide-bonded: C26/C38, C32/C50, C37/C78, C60/C86, and C80/C96.

Belongs to the AVIT (prokineticin) family. Highly expressed in liver and ovary and weakly expressed in testis and placenta. Expressed in mucosa and mesenchyme of embryonic gut during enteric nervous system development (at protein level). Predominantly expressed in kidney and liver. Also expressed in lung, ovary, placenta and testis. In fetal liver, is restricted to and highly expressed in hepatocytes. In adult kidney, expression is restricted to the endothelial tubule cells. In placenta, expressed throughout gestation.

The protein localises to the secreted. Functionally, potently contracts gastrointestinal (GI) smooth muscle. Induces proliferation, migration and fenestration (the formation of membrane discontinuities) in capillary endothelial cells. Induces proliferation and differentiation, but not migration, of enteric neural crest cells. Directly influences neuroblastoma progression by promoting the proliferation and migration of neuroblastoma cells. Positively regulates PTGS2 expression and prostaglandin synthesis. May play a role in placentation. May play a role in normal and pathological testis angiogenesis. This Mus musculus (Mouse) protein is Prokineticin-1.